A 185-amino-acid chain; its full sequence is Ribosome-recycling factor (185 aa).

It belongs to the RRF family.

It is found in the cytoplasm. In terms of biological role, responsible for the release of ribosomes from messenger RNA at the termination of protein biosynthesis. May increase the efficiency of translation by recycling ribosomes from one round of translation to another. The sequence is that of Ribosome-recycling factor from Campylobacter jejuni subsp. jejuni serotype O:2 (strain ATCC 700819 / NCTC 11168).